We begin with the raw amino-acid sequence, 350 residues long: D-guloside 3-dehydrogenase (350 aa).

This sequence belongs to the zinc-containing alcohol dehydrogenase family. Zn(2+) is required as a cofactor.

The catalysed reaction is a D-guloside + NAD(+) = a 3-dehydro-D-guloside + NADH + H(+). In terms of biological role, catalyzes the NAD(+)-dependent oxidation of the hydroxyl group at C3 of D-gulosides leading to 3-dehydro-D-gulosides. Probably functions in a metabolic pathway that transforms D-gulosides to D-glucosides. Is also able to catalyze the reverse reactions, i.e. the NADH-dependent reduction of the oxo group at C3 of 3-dehydro-D-gulosides leading to D-gulosides. In vitro, can oxidize D-gulose and methyl beta-D-guloside, and reduce methyl alpha-3-dehydro-D-guloside and methyl beta-3-dehydro-D-guloside. However, the actual specific physiological substrates for this metabolic pathway are unknown. The protein is D-guloside 3-dehydrogenase (ycjQ) of Escherichia coli (strain K12).